The chain runs to 664 residues: Sorbicillinoid biosynthetic cluster transcription factor sor3 (664 aa).

The zn(2)-C6 fungal-type DNA-binding region spans 40 to 67 (CQSCRASKVKCDGGRPVCARCQKRGRAC). The interval 68–102 (SYSQHDAASPRGRGRQRAKAPTRQPRPIRSRASVE) is disordered.

The protein localises to the nucleus. Its function is as follows. Transcription factor that acts in concert with sor4 which is a transcriptional activator of the gene cluster that mediates the biosynthesis of sorbicillinoids, a diverse group of yellow secondary metabolites that restrict growth of competing pathogenic fungi but not of bacteria. Regulates the cluster genes in a light dependent manner. Also plays a direct or indirect role in regulation of paracelsin biosynthesis and cellulase gene expression. The protein is Sorbicillinoid biosynthetic cluster transcription factor sor3 of Hypocrea jecorina (strain QM6a) (Trichoderma reesei).